The following is a 445-amino-acid chain: Argininosuccinate synthase (445 aa).

ATP-binding positions include 17–25 (AFSGGLDTS) and A43. Y99 lines the L-citrulline pocket. Positions 129 and 131 each coordinate ATP. The L-aspartate site is built by T131, N135, and D136. N135 contributes to the L-citrulline binding site. Residue D136 participates in ATP binding. 2 residues coordinate L-citrulline: R139 and S192. Residue D194 participates in ATP binding. Residues T201, E203, and E280 each contribute to the L-citrulline site.

It belongs to the argininosuccinate synthase family. Type 2 subfamily. As to quaternary structure, homotetramer.

The protein localises to the cytoplasm. It catalyses the reaction L-citrulline + L-aspartate + ATP = 2-(N(omega)-L-arginino)succinate + AMP + diphosphate + H(+). The protein operates within amino-acid biosynthesis; L-arginine biosynthesis; L-arginine from L-ornithine and carbamoyl phosphate: step 2/3. The protein is Argininosuccinate synthase (argG) of Ralstonia nicotianae (strain ATCC BAA-1114 / GMI1000) (Ralstonia solanacearum).